Here is a 228-residue protein sequence, read N- to C-terminus: Biosynthetic peptidoglycan transglycosylase (228 aa).

A helical transmembrane segment spans residues Gly-8–Val-28.

It belongs to the glycosyltransferase 51 family.

It is found in the cell inner membrane. It catalyses the reaction [GlcNAc-(1-&gt;4)-Mur2Ac(oyl-L-Ala-gamma-D-Glu-L-Lys-D-Ala-D-Ala)](n)-di-trans,octa-cis-undecaprenyl diphosphate + beta-D-GlcNAc-(1-&gt;4)-Mur2Ac(oyl-L-Ala-gamma-D-Glu-L-Lys-D-Ala-D-Ala)-di-trans,octa-cis-undecaprenyl diphosphate = [GlcNAc-(1-&gt;4)-Mur2Ac(oyl-L-Ala-gamma-D-Glu-L-Lys-D-Ala-D-Ala)](n+1)-di-trans,octa-cis-undecaprenyl diphosphate + di-trans,octa-cis-undecaprenyl diphosphate + H(+). It functions in the pathway cell wall biogenesis; peptidoglycan biosynthesis. In terms of biological role, peptidoglycan polymerase that catalyzes glycan chain elongation from lipid-linked precursors. This chain is Biosynthetic peptidoglycan transglycosylase, found in Laribacter hongkongensis (strain HLHK9).